Reading from the N-terminus, the 33-residue chain is Photosystem II reaction center protein Psb30 (33 aa).

Residues 5 to 25 form a helical membrane-spanning segment; it reads LIVQLGSLTLITIAGPLIVAL.

Belongs to the Psb30/Ycf12 family. In terms of assembly, PSII is composed of 1 copy each of membrane proteins PsbA, PsbB, PsbC, PsbD, PsbE, PsbF, PsbH, PsbI, PsbJ, PsbK, PsbL, PsbM, PsbT, PsbY, PsbZ, Psb30/Ycf12, peripheral proteins of the oxygen-evolving complex and a large number of cofactors. It forms dimeric complexes.

The protein resides in the plastid. Its subcellular location is the chloroplast thylakoid membrane. Functionally, a core subunit of photosystem II (PSII), probably helps stabilize the reaction center. The sequence is that of Photosystem II reaction center protein Psb30 from Euglena mutabilis.